Here is a 261-residue protein sequence, read N- to C-terminus: tRNA U34 carboxymethyltransferase (261 aa).

Residues lysine 25, tryptophan 39, lysine 44, glycine 63, 114 to 115 (VE), tyrosine 135, and arginine 250 contribute to the carboxy-S-adenosyl-L-methionine site.

It belongs to the class I-like SAM-binding methyltransferase superfamily. CmoB family. As to quaternary structure, homotetramer.

It carries out the reaction carboxy-S-adenosyl-L-methionine + 5-hydroxyuridine(34) in tRNA = 5-carboxymethoxyuridine(34) in tRNA + S-adenosyl-L-homocysteine + H(+). In terms of biological role, catalyzes carboxymethyl transfer from carboxy-S-adenosyl-L-methionine (Cx-SAM) to 5-hydroxyuridine (ho5U) to form 5-carboxymethoxyuridine (cmo5U) at position 34 in tRNAs. The polypeptide is tRNA U34 carboxymethyltransferase (Helicobacter pylori (strain Shi470)).